The chain runs to 146 residues: Large ribosomal subunit protein uL15 (146 aa).

Positions 1–13 (MKLHELRPAEGSR) are enriched in basic and acidic residues. The disordered stretch occupies residues 1–55 (MKLHELRPAEGSRKSPKRVGRGTGSGLGKTSARGENGQNSRSGGGVRPGFEGGQM). Over residues 42-52 (SGGGVRPGFEG) the composition is skewed to gly residues.

The protein belongs to the universal ribosomal protein uL15 family. As to quaternary structure, part of the 50S ribosomal subunit.

In terms of biological role, binds to the 23S rRNA. This is Large ribosomal subunit protein uL15 from Clostridium tetani (strain Massachusetts / E88).